The chain runs to 1020 residues: MGRGAGREYSPAATTAENGGGKKKQKEKELDELKKEVAMDDHKLSLDELGRKYQVDLSKGLTNQRAQDVLARDGPNALTPPPTTPEWVKFCRQLFGGFSILLWIGAILCFLAYGIQAAMEDEPSNDNLYLGVVLAAVVIVTGCFSYYQEAKSSKIMDSFKNMVPQQALVIREGEKMQINAEEVVVGDLVEVKGGDRVPADLRIISSHGCKVDNSSLTGESEPQTRSPEFTHENPLETRNICFFSTNCVEGTARGIVIATGDRTVMGRIATLASGLEVGRTPIAMEIEHFIQLITGVAVFPGVSFFVLSLILGYSWLEAVIFLIGIIVANVPEGLLATVTVCLTLTAKRMARKNCLVKNLEAVETLGSTSTICSDKTGTLTQNRMTVAHMWFDNQIREADTTEDQSGATFDKRSPTWTALSRIAGLCNRAVFKAGQENISVSKRDTAGDASESALLKCIELSCGSVRKMRDRNPKVAEIPFNSTNKYQLSIHEREDSPQSHVLVMKGAPERILDRCPTILVQGKEIPLDKEMQDAFQNAYMELGGLGERVLGFCQLNLPSGKFPRGFKFDTDELNFPTEKLCFVGLMSMIDPPRAAVPDAVGKCRSAGIKVIMVTGDHPITAKAIAKGVGIISEGNETVEDIAARLNIPMSQVNPREAKACVVHGSDLKDMTSEQLDEILKNHTEIVFARTSPQQKLVIVEGCQRQGAIVAVTGDGVNDSPALKKADIGIAMGISGSDVSKQAADMILLDDNFASIVTGVEEGRLVFDNLKKSIAYTLTSNIPEITPFLLFIIANIPLPLGTVTILCIDLGTDMVPAISLAYEAAESDIMKRQPRNSQTDKLVNERLISMAYGQIGMIQALGGFFTYFVILAENGFLPSRLLGIRLDWDDRTMNDLEDSYGQEWTYEQRKVVEFTCHTAFFASIVVVQWADLIICKTRRNSVFQQGMKNKILIFGLLEETALAAFLSYCPGMGVALRMYPLKVTWWFCAFPYSLLIFIYDEVRKLILRRYPGGWVEKETYY.

Residues 1 to 5 (MGRGA) constitute a propeptide that is removed on maturation. The interval 1 to 31 (MGRGAGREYSPAATTAENGGGKKKQKEKELD) is disordered. At 6–85 (GREYSPAATT…NALTPPPTTP (80 aa)) the chain is on the cytoplasmic side. S10 is modified (phosphoserine). Residues 80–82 (PPP) form an interaction with phosphoinositide-3 kinase region. Residues 86-106 (EWVKFCRQLFGGFSILLWIGA) form a helical membrane-spanning segment. Over 107–129 (ILCFLAYGIQAAMEDEPSNDNLY) the chain is Extracellular. The helical transmembrane segment at 130–150 (LGVVLAAVVIVTGCFSYYQEA) threads the bilayer. Residues 151–286 (KSSKIMDSFK…VGRTPIAMEI (136 aa)) are Cytoplasmic-facing. Positions 212–227 (DNSSLTGESEPQTRSP) are enriched in polar residues. Residues 212–231 (DNSSLTGESEPQTRSPEFTH) form a disordered region. A helical transmembrane segment spans residues 287 to 306 (EHFIQLITGVAVFPGVSFFV). Over 307–318 (LSLILGYSWLEA) the chain is Extracellular. The helical transmembrane segment at 319-336 (VIFLIGIIVANVPEGLLA) threads the bilayer. At 337-769 (TVTVCLTLTA…EEGRLVFDNL (433 aa)) the chain is on the cytoplasmic side. The 4-aspartylphosphate intermediate role is filled by D374. Phosphoserine occurs at positions 439, 450, 496, and 559. Phosphothreonine is present on T570. 2 positions are modified to phosphoserine: S587 and S672. Residues D714 and D718 each coordinate Mg(2+). Residues 770–789 (KKSIAYTLTSNIPEITPFLL) traverse the membrane as a helical segment. Over 790-799 (FIIANIPLPL) the chain is Extracellular. Residues 800 to 820 (GTVTILCIDLGTDMVPAISLA) form a helical membrane-spanning segment. The Cytoplasmic portion of the chain corresponds to 821–840 (YEAAESDIMKRQPRNSQTDK). S826 is modified (phosphoserine). The helical transmembrane segment at 841 to 863 (LVNERLISMAYGQIGMIQALGGF) threads the bilayer. Topologically, residues 864–915 (FTYFVILAENGFLPSRLLGIRLDWDDRTMNDLEDSYGQEWTYEQRKVVEFTC) are extracellular. Residues 916-935 (HTAFFASIVVVQWADLIICK) traverse the membrane as a helical segment. The Cytoplasmic portion of the chain corresponds to 936–948 (TRRNSVFQQGMKN). S940 carries the phosphoserine; by PKA modification. The chain crosses the membrane as a helical span at residues 949-967 (KILIFGLLEETALAAFLSY). The Extracellular portion of the chain corresponds to 968–982 (CPGMGVALRMYPLKV). A helical membrane pass occupies residues 983-1003 (TWWFCAFPYSLLIFIYDEVRK). At 1004–1020 (LILRRYPGGWVEKETYY) the chain is on the cytoplasmic side.

The protein belongs to the cation transport ATPase (P-type) (TC 3.A.3) family. Type IIC subfamily. The sodium/potassium-transporting ATPase is composed of a catalytic alpha subunit, an auxiliary non-catalytic beta subunit and an additional regulatory subunit. Interacts with regulatory subunit FXYD1.

The protein resides in the membrane. It is found in the cell membrane. The enzyme catalyses K(+)(out) + Na(+)(in) + ATP + H2O = K(+)(in) + Na(+)(out) + ADP + phosphate + H(+). This is the catalytic component of the active enzyme, which catalyzes the hydrolysis of ATP coupled with the exchange of sodium and potassium ions across the plasma membrane. This action creates the electrochemical gradient of sodium and potassium, providing the energy for active transport of various nutrients. The polypeptide is Sodium/potassium-transporting ATPase subunit alpha-2 (ATP1A2) (Pongo abelii (Sumatran orangutan)).